A 131-amino-acid polypeptide reads, in one-letter code: Fluoride-specific ion channel FluC 1 (131 aa).

The next 4 helical transmembrane spans lie at leucine 4–leucine 24, histidine 40–leucine 60, leucine 73–valine 93, and leucine 108–leucine 128. The Na(+) site is built by glycine 83 and serine 86.

It belongs to the fluoride channel Fluc/FEX (TC 1.A.43) family.

The protein localises to the cell inner membrane. It catalyses the reaction fluoride(in) = fluoride(out). Its activity is regulated as follows. Na(+) is not transported, but it plays an essential structural role and its presence is essential for fluoride channel function. Fluoride-specific ion channel. Important for reducing fluoride concentration in the cell, thus reducing its toxicity. The protein is Fluoride-specific ion channel FluC 1 of Prochlorococcus marinus (strain MIT 9313).